The sequence spans 349 residues: Histidinol-phosphate aminotransferase (349 aa).

N6-(pyridoxal phosphate)lysine is present on Lys210.

It belongs to the class-II pyridoxal-phosphate-dependent aminotransferase family. Histidinol-phosphate aminotransferase subfamily. As to quaternary structure, homodimer. Requires pyridoxal 5'-phosphate as cofactor.

It carries out the reaction L-histidinol phosphate + 2-oxoglutarate = 3-(imidazol-4-yl)-2-oxopropyl phosphate + L-glutamate. Its pathway is amino-acid biosynthesis; L-histidine biosynthesis; L-histidine from 5-phospho-alpha-D-ribose 1-diphosphate: step 7/9. This Flavobacterium johnsoniae (strain ATCC 17061 / DSM 2064 / JCM 8514 / BCRC 14874 / CCUG 350202 / NBRC 14942 / NCIMB 11054 / UW101) (Cytophaga johnsonae) protein is Histidinol-phosphate aminotransferase.